The following is a 296-amino-acid chain: dTDP-4-dehydrorhamnose reductase (296 aa).

NADH-binding positions include 10–12 (GQI), 35–36 (DL), and 59–61 (AYT). NADPH-binding positions include 11–12 (QI), 35–36 (DL), and 59–61 (AYT). Residue 100–101 (TD) coordinates dTDP-beta-L-rhamnose. NADH contacts are provided by Tyr-124 and Lys-128. Residues Tyr-124 and Lys-128 each coordinate NADPH. Tyr-124 acts as the Proton donor/acceptor in catalysis. Residue Trp-149 participates in dTDP-beta-L-rhamnose binding.

This sequence belongs to the dTDP-4-dehydrorhamnose reductase family. As to quaternary structure, homodimer. Mg(2+) is required as a cofactor.

It carries out the reaction dTDP-beta-L-rhamnose + NADP(+) = dTDP-4-dehydro-beta-L-rhamnose + NADPH + H(+). It participates in carbohydrate biosynthesis; dTDP-L-rhamnose biosynthesis. Functionally, involved in the biosynthesis of the dTDP-L-rhamnose which is an important component of lipopolysaccharide (LPS). Catalyzes the reduction of dTDP-6-deoxy-L-lyxo-4-hexulose to yield dTDP-L-rhamnose. RmlD uses NADH and NADPH nearly equally well. This Sinorhizobium fredii (strain NBRC 101917 / NGR234) protein is dTDP-4-dehydrorhamnose reductase.